The following is a 175-amino-acid chain: Small ribosomal subunit protein uS7 (175 aa).

This sequence belongs to the universal ribosomal protein uS7 family. In terms of assembly, part of the 30S ribosomal subunit. Contacts proteins S9 and S11.

In terms of biological role, one of the primary rRNA binding proteins, it binds directly to 16S rRNA where it nucleates assembly of the head domain of the 30S subunit. Is located at the subunit interface close to the decoding center, probably blocks exit of the E-site tRNA. The protein is Small ribosomal subunit protein uS7 of Legionella pneumophila (strain Paris).